The chain runs to 129 residues: Small ribosomal subunit protein uS11 (129 aa).

This sequence belongs to the universal ribosomal protein uS11 family. As to quaternary structure, part of the 30S ribosomal subunit. Interacts with proteins S7 and S18. Binds to IF-3.

Functionally, located on the platform of the 30S subunit, it bridges several disparate RNA helices of the 16S rRNA. Forms part of the Shine-Dalgarno cleft in the 70S ribosome. The protein is Small ribosomal subunit protein uS11 of Novosphingobium aromaticivorans (strain ATCC 700278 / DSM 12444 / CCUG 56034 / CIP 105152 / NBRC 16084 / F199).